A 389-amino-acid chain; its full sequence is tRNA-specific 2-thiouridylase MnmA (389 aa).

ATP is bound by residues 34 to 41 and Leu60; that span reads AMSGGVDS. Cys128 acts as the Nucleophile in catalysis. Cys128 and Cys225 are oxidised to a cystine. Gly152 serves as a coordination point for ATP. The tract at residues 174–176 is interaction with tRNA; that stretch reads RDQ. Cys225 serves as the catalytic Cysteine persulfide intermediate.

The protein belongs to the MnmA/TRMU family.

The protein resides in the cytoplasm. It catalyses the reaction S-sulfanyl-L-cysteinyl-[protein] + uridine(34) in tRNA + AH2 + ATP = 2-thiouridine(34) in tRNA + L-cysteinyl-[protein] + A + AMP + diphosphate + H(+). Functionally, catalyzes the 2-thiolation of uridine at the wobble position (U34) of tRNA, leading to the formation of s(2)U34. This chain is tRNA-specific 2-thiouridylase MnmA, found in Paracoccus denitrificans (strain Pd 1222).